Reading from the N-terminus, the 350-residue chain is GTPase Obg (350 aa).

An Obg domain is found at 1–159; the sequence is MKLVDEAEIE…RTLKLELKLL (159 aa). The interval 127 to 147 is disordered; that stretch reads NMHFKSSTNRSPRQALPGEPG. One can recognise an OBG-type G domain in the interval 160-337; it reads ADVGLLGFPN…IMSRIMAFFD (178 aa). GTP-binding positions include 166–173, 191–195, 213–216, 287–290, and 318–320; these read GFPNAGKS, FTTLY, DIPG, NKAD, and SAL. Mg(2+) is bound by residues S173 and T193.

The protein belongs to the TRAFAC class OBG-HflX-like GTPase superfamily. OBG GTPase family. As to quaternary structure, monomer. Requires Mg(2+) as cofactor.

Its subcellular location is the cytoplasm. In terms of biological role, an essential GTPase which binds GTP, GDP and possibly (p)ppGpp with moderate affinity, with high nucleotide exchange rates and a fairly low GTP hydrolysis rate. Plays a role in control of the cell cycle, stress response, ribosome biogenesis and in those bacteria that undergo differentiation, in morphogenesis control. This Stenotrophomonas maltophilia (strain R551-3) protein is GTPase Obg.